The following is a 357-amino-acid chain: Probable dual-specificity RNA methyltransferase RlmN (357 aa).

Catalysis depends on Glu-92, which acts as the Proton acceptor. The Radical SAM core domain maps to 98–330 (QEYGLSVCVT…KKNGINCVIR (233 aa)). An intrachain disulfide couples Cys-105 to Cys-341. [4Fe-4S] cluster is bound by residues Cys-112, Cys-116, and Cys-119. S-adenosyl-L-methionine is bound by residues 164–165 (GE), Ser-196, 219–221 (SLH), and Asn-297. The active-site S-methylcysteine intermediate is the Cys-341.

This sequence belongs to the radical SAM superfamily. RlmN family. The cofactor is [4Fe-4S] cluster.

The protein resides in the cytoplasm. The enzyme catalyses adenosine(2503) in 23S rRNA + 2 reduced [2Fe-2S]-[ferredoxin] + 2 S-adenosyl-L-methionine = 2-methyladenosine(2503) in 23S rRNA + 5'-deoxyadenosine + L-methionine + 2 oxidized [2Fe-2S]-[ferredoxin] + S-adenosyl-L-homocysteine. The catalysed reaction is adenosine(37) in tRNA + 2 reduced [2Fe-2S]-[ferredoxin] + 2 S-adenosyl-L-methionine = 2-methyladenosine(37) in tRNA + 5'-deoxyadenosine + L-methionine + 2 oxidized [2Fe-2S]-[ferredoxin] + S-adenosyl-L-homocysteine. In terms of biological role, specifically methylates position 2 of adenine 2503 in 23S rRNA and position 2 of adenine 37 in tRNAs. The protein is Probable dual-specificity RNA methyltransferase RlmN of Enterococcus faecalis (strain ATCC 700802 / V583).